The sequence spans 95 residues: Protein TusB (95 aa).

The protein belongs to the DsrH/TusB family. Heterohexamer, formed by a dimer of trimers. The hexameric TusBCD complex contains 2 copies each of TusB, TusC and TusD. The TusBCD complex interacts with TusE.

It localises to the cytoplasm. In terms of biological role, part of a sulfur-relay system required for 2-thiolation of 5-methylaminomethyl-2-thiouridine (mnm(5)s(2)U) at tRNA wobble positions. This chain is Protein TusB, found in Escherichia coli O81 (strain ED1a).